The primary structure comprises 25 residues: Caerin-1.10 (25 aa).

Position 25 is a leucine amide (Leu-25).

The protein belongs to the frog skin active peptide (FSAP) family. Caerin subfamily. Expressed by the skin dorsal glands.

It is found in the secreted. Functionally, antibacterial peptide with wide spectrum of activity. The polypeptide is Caerin-1.10 (Litoria rothii (Roth's tree frog)).